Here is a 265-residue protein sequence, read N- to C-terminus: Glutamate racemase (265 aa).

Residues 7-8 (DS) and 39-40 (YG) contribute to the substrate site. Cys-70 (proton donor/acceptor) is an active-site residue. Residue 71–72 (NT) participates in substrate binding. The active-site Proton donor/acceptor is Cys-177.

This sequence belongs to the aspartate/glutamate racemases family.

The catalysed reaction is L-glutamate = D-glutamate. It participates in cell wall biogenesis; peptidoglycan biosynthesis. Provides the (R)-glutamate required for cell wall biosynthesis. This chain is Glutamate racemase, found in Prochlorococcus marinus (strain NATL1A).